The sequence spans 346 residues: 4-hydroxy-3-methylbut-2-enyl diphosphate reductase (346 aa).

Cysteine 19 lines the [4Fe-4S] cluster pocket. (2E)-4-hydroxy-3-methylbut-2-enyl diphosphate is bound by residues histidine 48 and histidine 84. Residues histidine 48 and histidine 84 each coordinate dimethylallyl diphosphate. Isopentenyl diphosphate-binding residues include histidine 48 and histidine 84. Cysteine 106 contacts [4Fe-4S] cluster. Histidine 134 contributes to the (2E)-4-hydroxy-3-methylbut-2-enyl diphosphate binding site. Dimethylallyl diphosphate is bound at residue histidine 134. Histidine 134 provides a ligand contact to isopentenyl diphosphate. Residue glutamate 136 is the Proton donor of the active site. Position 175 (threonine 175) interacts with (2E)-4-hydroxy-3-methylbut-2-enyl diphosphate. Cysteine 205 contributes to the [4Fe-4S] cluster binding site. Residues serine 233, serine 234, asparagine 235, and serine 278 each coordinate (2E)-4-hydroxy-3-methylbut-2-enyl diphosphate. Residues serine 233, serine 234, asparagine 235, and serine 278 each coordinate dimethylallyl diphosphate. Isopentenyl diphosphate contacts are provided by serine 233, serine 234, asparagine 235, and serine 278.

It belongs to the IspH family. [4Fe-4S] cluster is required as a cofactor.

The catalysed reaction is isopentenyl diphosphate + 2 oxidized [2Fe-2S]-[ferredoxin] + H2O = (2E)-4-hydroxy-3-methylbut-2-enyl diphosphate + 2 reduced [2Fe-2S]-[ferredoxin] + 2 H(+). It catalyses the reaction dimethylallyl diphosphate + 2 oxidized [2Fe-2S]-[ferredoxin] + H2O = (2E)-4-hydroxy-3-methylbut-2-enyl diphosphate + 2 reduced [2Fe-2S]-[ferredoxin] + 2 H(+). The protein operates within isoprenoid biosynthesis; dimethylallyl diphosphate biosynthesis; dimethylallyl diphosphate from (2E)-4-hydroxy-3-methylbutenyl diphosphate: step 1/1. It participates in isoprenoid biosynthesis; isopentenyl diphosphate biosynthesis via DXP pathway; isopentenyl diphosphate from 1-deoxy-D-xylulose 5-phosphate: step 6/6. Its function is as follows. Catalyzes the conversion of 1-hydroxy-2-methyl-2-(E)-butenyl 4-diphosphate (HMBPP) into a mixture of isopentenyl diphosphate (IPP) and dimethylallyl diphosphate (DMAPP). Acts in the terminal step of the DOXP/MEP pathway for isoprenoid precursor biosynthesis. The polypeptide is 4-hydroxy-3-methylbut-2-enyl diphosphate reductase (Brucella melitensis biotype 1 (strain ATCC 23456 / CCUG 17765 / NCTC 10094 / 16M)).